The sequence spans 92 residues: Progonadoliberin-1 (92 aa).

The first 23 residues, 1–23, serve as a signal peptide directing secretion; it reads MKPIQKLLAGLILLTWCVEGCSS. Gln-24 is subject to Pyrrolidone carboxylic acid. At Gly-33 the chain carries Glycine amide.

This sequence belongs to the GnRH family. In terms of processing, the precursor is cleaved by ACE, which removes the Gly-Lys-Arg peptide at the C-terminus, leading to mature hormone. The mature form of Gonadoliberin-1 is also cleaved and degraded by ACE.

Its subcellular location is the secreted. In terms of biological role, stimulates the secretion of gonadotropins; it stimulates the secretion of both luteinizing and follicle-stimulating hormones. This chain is Progonadoliberin-1 (GNRH1), found in Homo sapiens (Human).